Here is a 386-residue protein sequence, read N- to C-terminus: Histidine decarboxylase (386 aa).

Histidine 120 is a substrate binding site. Lysine 233 is subject to N6-(pyridoxal phosphate)lysine.

It belongs to the group II decarboxylase family. In terms of assembly, homotetramer. Requires pyridoxal 5'-phosphate as cofactor.

The enzyme catalyses L-histidine + H(+) = histamine + CO2. This is Histidine decarboxylase from Vibrio campbellii (strain ATCC BAA-1116).